Reading from the N-terminus, the 417-residue chain is Protein translocase subunit SecD (417 aa).

Transmembrane regions (helical) follow at residues 9-29 (LLVS…PLVS), 236-256 (ASMK…LLYY), 258-278 (LSGL…LAVM), 288-308 (PGMA…VLIF), 333-353 (FTTI…LFYL), and 360-380 (GFAV…VTVT).

Belongs to the SecD/SecF family. SecD subfamily. Forms a complex with SecF. Part of the essential Sec protein translocation apparatus which comprises SecA, SecYEG and auxiliary proteins SecDF. Other proteins may also be involved.

The protein localises to the cell membrane. Its function is as follows. Part of the Sec protein translocase complex. Interacts with the SecYEG preprotein conducting channel. SecDF uses the proton motive force (PMF) to complete protein translocation after the ATP-dependent function of SecA. This Acidaminococcus fermentans (strain ATCC 25085 / DSM 20731 / CCUG 9996 / CIP 106432 / VR4) protein is Protein translocase subunit SecD.